A 390-amino-acid polypeptide reads, in one-letter code: Putative 8-amino-7-oxononanoate synthase (390 aa).

R20 serves as a coordination point for substrate. 107–108 (GY) is a pyridoxal 5'-phosphate binding site. H132 is a substrate binding site. Pyridoxal 5'-phosphate-binding positions include S181, 206-209 (DDAH), and 237-240 (TLGK). K240 carries the N6-(pyridoxal phosphate)lysine modification. A substrate-binding site is contributed by T356.

This sequence belongs to the class-II pyridoxal-phosphate-dependent aminotransferase family. BioF subfamily. In terms of assembly, homodimer. The cofactor is pyridoxal 5'-phosphate.

The enzyme catalyses 6-carboxyhexanoyl-[ACP] + L-alanine + H(+) = (8S)-8-amino-7-oxononanoate + holo-[ACP] + CO2. Its pathway is cofactor biosynthesis; biotin biosynthesis. Functionally, catalyzes the decarboxylative condensation of pimeloyl-[acyl-carrier protein] and L-alanine to produce 8-amino-7-oxononanoate (AON), [acyl-carrier protein], and carbon dioxide. The protein is Putative 8-amino-7-oxononanoate synthase (bioF) of Syntrophotalea carbinolica (strain DSM 2380 / NBRC 103641 / GraBd1) (Pelobacter carbinolicus).